The chain runs to 411 residues: MVQGPIQVNSEIGKLKTVLLKRPGKELENLVPDHLSGLLFDDIPYLKVAQEEHDKFAQTLRDEGIEVVYLEKLAAESITEPEVRENFINDILTESKKTILGHETEIKEFFSKLSDQELVNKIMAGIRKEEIQLETTHLVEYMDDRYPFYLDPMPNLYFTRDPQASIGRGMTINRMYWRARRRESIFMTYILKHHPRFKDKDVPVWLDRNSPFNIEGGDELVLSKDVLAIGISERTSAQAIEKLARNIFKDANTSFKKIVAIEIPNTRTFMHLDTVLTMIDYDKFTVHAAIFKEENNMNIFTIEQNDGKDDIKITRSSKLRETLAEVLEVEKVDFIPTGNGDVIDGAREQWNDGSNTLCIRPGVVVTYDRNYVSNQLLRDKGIKVIEITGSELVRGRGGPRCMSQPLFREDI.

Cys-401 (amidino-cysteine intermediate) is an active-site residue.

Belongs to the arginine deiminase family.

It localises to the cytoplasm. The catalysed reaction is L-arginine + H2O = L-citrulline + NH4(+). It participates in amino-acid degradation; L-arginine degradation via ADI pathway; carbamoyl phosphate from L-arginine: step 1/2. This is Arginine deiminase 1 (arcA1) from Staphylococcus epidermidis (strain ATCC 12228 / FDA PCI 1200).